The following is a 143-amino-acid chain: Large ribosomal subunit protein uL15 (143 aa).

This sequence belongs to the universal ribosomal protein uL15 family. In terms of assembly, part of the 50S ribosomal subunit.

Its function is as follows. Binds to the 23S rRNA. The chain is Large ribosomal subunit protein uL15 from Methanococcus aeolicus (strain ATCC BAA-1280 / DSM 17508 / OCM 812 / Nankai-3).